The sequence spans 239 residues: SKA complex subunit 1 (239 aa).

The disordered stretch occupies residues 87–115 (PDSVPQKSTRPCLDDEKEGSSVVQPPESG). The segment at 116–239 (NRHVQLISEQ…RCGPLTFYYA (124 aa)) is microtubule binding.

This sequence belongs to the SKA1 family. In terms of assembly, component of the SKA complex, composed of two copies of ska-1 and a single copy of ska-3. The core complex associates with microtubules and may form dimeric assemblies. Interacts with ska-3 and microtubules.

Its subcellular location is the cytoplasm. The protein resides in the cytoskeleton. The protein localises to the spindle. It is found in the chromosome. It localises to the centromere. Its subcellular location is the kinetochore. Component of the SKA complex, a microtubule plus end-binding complex of the outer kinetochore that stabilizes spindle microtubule-kinetochore attachments, promotes alignment of chromosomes at the mitotic spindle equator (chromosome congression) and assists suppression of the spindle assembly checkpoint. Kinetochores, consisting of a centromere-associated inner segment and a microtubule-contacting outer segment, play a crucial role in chromosome segregation by mediating the physical connection between centromeric DNA and spindle microtubules. The outer kinetochore is made up of the ten-subunit KMN network complex, comprising the MIS12, NDC80 and KNL1 complexes, and auxiliary microtubule-associated components such as the SKA complex; together they connect the outer kinetochore with the inner kinetochore, bind microtubules, and mediate interactions with mitotic checkpoint proteins that delay anaphase until chromosomes are bioriented on the spindle. The SKA complex is loaded onto bioriented kinetochores and it facilitates chromosome congression by stabilizing microtubules and end-on attachment of the NDC80 complex to depolymerizing spindle microtubules, thereby assisting the poleward-moving kinetochore in withstanding microtubule pulling forces. The complex associates with dynamic microtubule plus-ends and can track both depolymerizing and elongating microtubules. The complex recruits protein phosphatase 1 (PP1) to the kinetochore in prometaphase and metaphase, to oppose spindle assembly checkpoint signaling and promote the onset of anaphase. In the complex, it mediates interactions with microtubules. During meiosis the SKA complex stabilizes the meiotic spindle and is required for its migration to the cortex. In Caenorhabditis briggsae, this protein is SKA complex subunit 1.